Here is a 382-residue protein sequence, read N- to C-terminus: MELFPVAVNGVSHAEDPFSGPLTFIAPWNYKVLATLMFVVTAASLSENFAVMLVTFRFTQLRKPLNYIIVNLSLADFLVSLTGGTISFLTNYHGYFFLGKWACVLEGFAVTYFGIVALWSLAVLAFERFFVICRPLGNIRLRGKHAALGLLFVWTFSFIWTIPPVLGWSSYTVSKIGTTCEPNWYSGNFHDHTFIIAFFITCFILPLGVIVVCYCKLIKKLRKVSNTHGRLGNARKPERQVTRMVVVMIVAFMVAWTPYAAFSIVVTAHPSIHLDPRLAAAPAFFSKTAAVYNPVIYVFMNKQFRKCLVQLLRCRDVTIIEGNINQTSERQGMTNESHTGEMSTIASRIPKDGSIPEKTQEHPGERRSLAHIPIPENKVCPM.

The Extracellular portion of the chain corresponds to 1–35 (MELFPVAVNGVSHAEDPFSGPLTFIAPWNYKVLAT). Residues 36–56 (LMFVVTAASLSENFAVMLVTF) form a helical membrane-spanning segment. The Cytoplasmic portion of the chain corresponds to 57-67 (RFTQLRKPLNY). The chain crosses the membrane as a helical span at residues 68-88 (IIVNLSLADFLVSLTGGTISF). At 89-103 (LTNYHGYFFLGKWAC) the chain is on the extracellular side. Cysteine 103 and cysteine 180 are joined by a disulfide. The helical transmembrane segment at 104–124 (VLEGFAVTYFGIVALWSLAVL) threads the bilayer. Residues 125 to 147 (AFERFFVICRPLGNIRLRGKHAA) lie on the Cytoplasmic side of the membrane. Residues 148 to 168 (LGLLFVWTFSFIWTIPPVLGW) traverse the membrane as a helical segment. Residues 169–193 (SSYTVSKIGTTCEPNWYSGNFHDHT) are Extracellular-facing. A helical transmembrane segment spans residues 194–214 (FIIAFFITCFILPLGVIVVCY). Over 215–244 (CKLIKKLRKVSNTHGRLGNARKPERQVTRM) the chain is Cytoplasmic. Residues 245–265 (VVVMIVAFMVAWTPYAAFSIV) traverse the membrane as a helical segment. Topologically, residues 266–279 (VTAHPSIHLDPRLA) are extracellular. Residues 280–300 (AAPAFFSKTAAVYNPVIYVFM) traverse the membrane as a helical segment. At lysine 287 the chain carries N6-(retinylidene)lysine. The Cytoplasmic portion of the chain corresponds to 301-382 (NKQFRKCLVQ…PIPENKVCPM (82 aa)). Residues 330 to 346 (RQGMTNESHTGEMSTIA) show a composition bias toward polar residues. Residues 330–371 (RQGMTNESHTGEMSTIASRIPKDGSIPEKTQEHPGERRSLAH) are disordered. A compositionally biased stretch (basic and acidic residues) spans 349–368 (IPKDGSIPEKTQEHPGERRS).

Belongs to the G-protein coupled receptor 1 family. Opsin subfamily. Expressed in a subset of retinal horizontal cells as well as in retinal ganglion cells.

Its subcellular location is the membrane. In Rutilus rutilus (Roach), this protein is Opsin-VA.